Here is a 368-residue protein sequence, read N- to C-terminus: Probable ubiquitin receptor RAD23a (368 aa).

Residues methionine 1 to serine 77 form the Ubiquitin-like domain. Residues alanine 80–serine 111 show a composition bias toward low complexity. The tract at residues alanine 80–alanine 136 is disordered. Positions alanine 116–alanine 136 are enriched in polar residues. The region spanning serine 142–tyrosine 185 is the UBA 1 domain. A disordered region spans residues valine 202 to leucine 222. One can recognise an STI1 domain in the interval glycine 239 to isoleucine 282. Residues valine 320–leucine 360 form the UBA 2 domain.

Belongs to the RAD23 family. In terms of assembly, interacts with 'Lys-48'-linked polyubiquitin chains. Interacts with RPN10. Widely expressed in the whole plant.

The protein localises to the nucleus. It localises to the cytoplasm. In terms of biological role, may be involved in nucleotide excision repair. Binds and presumably selects ubiquitin-conjugates for destruction. Prefers multiubiquitin chains rather than single ubiquitins, with a binding affinity for 'Lys-48'-linked ubiquitin chains. Acts as a ubiquitin receptor that associates with the 26S proteasomal docking subunit RPN10 for the indirect recognition of ubiquitinated substrates of ubiquitin/26S proteasome-mediated proteolysis (UPP). Involved in UV tolerance in roots, specifically in dark conditions. This is Probable ubiquitin receptor RAD23a from Arabidopsis thaliana (Mouse-ear cress).